The following is a 614-amino-acid chain: Deoxynucleoside triphosphate triphosphohydrolase SAMHD1 (614 aa).

Positions 1–13 are enriched in low complexity; the sequence is MGSPAAGWGAAPA. Residues 1–33 form a disordered region; it reads MGSPAAGWGAAPAKRARREGSAESSCGSPADRD. The SAM domain occupies 37-102; that stretch reads WDTERLCQHL…LACLNQLRQT (66 aa). GTP-binding residues include Lys-107 and Val-108. A dGTP-binding site is contributed by Asn-110. Positions 128, 133, and 136 each coordinate GTP. Positions 140, 141, 147, and 155 each coordinate dGTP. Gln-140 serves as a coordination point for dATP. DCTP is bound at residue Gln-140. Position 140 (Gln-140) interacts with dTTP. Arg-155 lines the dATP pocket. Arg-155 lines the dCTP pocket. Arg-155 is a dTTP binding site. The HD domain maps to 155 to 307; the sequence is RFEHSLGVGY…GIDVDKWDYF (153 aa). Mn(2+)-binding residues include His-158, His-197, and Asp-198. Residues His-201 and His-206 each contribute to the dATP site. His-201 and His-206 together coordinate dCTP. DTTP is bound by residues His-201 and His-206. His-224 is a catalytic residue. Mn(2+) is bound at residue Asp-302. Lys-303, Tyr-306, Asp-310, Arg-324, Arg-343, Lys-345, Asn-349, Arg-357, Tyr-365, Gln-366, His-367, and Lys-368 together coordinate dGTP. Lys-303, Tyr-306, and Asp-310 together coordinate dATP. 3 residues coordinate dCTP: Lys-303, Tyr-306, and Asp-310. Positions 303, 306, and 310 each coordinate dTTP. DATP is bound at residue Arg-357. Arg-357 serves as a coordination point for dCTP. A dATP-binding site is contributed by Gln-366. Residue Gln-366 participates in dCTP binding. Residue Gln-366 participates in dTTP binding. GTP contacts are provided by Arg-442, Lys-446, and Lys-515. Residue Lys-515 participates in dGTP binding.

This sequence belongs to the SAMHD1 family. Homodimer; in absence of GTP and dNTP. Homotetramer; in GTP- and dNTP-bound form. Interacts with rbbp8/CtIP. It depends on Zn(2+) as a cofactor.

The protein resides in the nucleus. The protein localises to the chromosome. It catalyses the reaction a 2'-deoxyribonucleoside 5'-triphosphate + H2O = a 2'-deoxyribonucleoside + triphosphate + H(+). It carries out the reaction dATP + H2O = 2'-deoxyadenosine + triphosphate + H(+). The enzyme catalyses dCTP + H2O = 2'-deoxycytidine + triphosphate + H(+). The catalysed reaction is dGTP + H2O = 2'-deoxyguanosine + triphosphate + H(+). It catalyses the reaction dTTP + H2O = thymidine + triphosphate + H(+). Its activity is regulated as follows. Allosterically activated and regulated via the combined actions of GTP and dNTPs (dATP, dGTP, dTTP and dCTP): Allosteric site 1 binds GTP, while allosteric site 2 binds dNTP. Allosteric activation promotes the formation of highly active homotetramers. Its function is as follows. Protein that acts both as a host restriction factor involved in defense response to virus and as a regulator of DNA end resection at stalled replication forks. Has deoxynucleoside triphosphate (dNTPase) activity, which is required to restrict infection by viruses: dNTPase activity reduces cellular dNTP levels to levels too low for retroviral reverse transcription to occur, blocking early-stage virus replication in dendritic and other myeloid cells. Functions during S phase at stalled DNA replication forks to promote the resection of gapped or reversed forks: acts by stimulating the exonuclease activity of MRE11, activating the ATR-CHK1 pathway and allowing the forks to restart replication. Its ability to promote degradation of nascent DNA at stalled replication forks is required to prevent induction of type I interferons, thereby preventing chronic inflammation. Ability to promote DNA end resection at stalled replication forks is independent of dNTPase activity. The polypeptide is Deoxynucleoside triphosphate triphosphohydrolase SAMHD1 (Gallus gallus (Chicken)).